A 277-amino-acid polypeptide reads, in one-letter code: MSTRNDVHLGHKAKKRFGQNFLNDPYVIDGIVSAINPLPGQNLVEIGPGLGAITEPVGREIDKFTVIELDRDLAARLRTHPELGSKLTIYEGDAMRFDFTQLIQEGNKLRIFGNLPYNISTPLMFHLFEFHKDIQDMHFMLQKEVVNRLAAGPGTKAYGRLTVMAQYYCKVMPVLEVPPTAFVPPPKVDSAVVRLVPYEVLPFPAKNLKWLDRVCREGFNQRRKTVRNCFKALLTKEQLEALGVNPSHRPENLTLEQFVIMANWLNDNYQAESTESA.

Residues asparagine 20, leucine 22, glycine 47, glutamate 68, aspartate 93, and asparagine 114 each contribute to the S-adenosyl-L-methionine site.

Belongs to the class I-like SAM-binding methyltransferase superfamily. rRNA adenine N(6)-methyltransferase family. RsmA subfamily.

Its subcellular location is the cytoplasm. It carries out the reaction adenosine(1518)/adenosine(1519) in 16S rRNA + 4 S-adenosyl-L-methionine = N(6)-dimethyladenosine(1518)/N(6)-dimethyladenosine(1519) in 16S rRNA + 4 S-adenosyl-L-homocysteine + 4 H(+). Specifically dimethylates two adjacent adenosines (A1518 and A1519) in the loop of a conserved hairpin near the 3'-end of 16S rRNA in the 30S particle. May play a critical role in biogenesis of 30S subunits. The protein is Ribosomal RNA small subunit methyltransferase A of Aliivibrio salmonicida (strain LFI1238) (Vibrio salmonicida (strain LFI1238)).